We begin with the raw amino-acid sequence, 231 residues long: Urease subunit gamma/beta (231 aa).

Residues 1–101 (MLLTPTELER…LVTVHQPIRP (101 aa)) form a urease gamma region. Residues 102–231 (GKLPLAVMPT…RARAQHFKGA (130 aa)) form a urease beta region.

It in the N-terminal section; belongs to the urease gamma subunit family. This sequence in the C-terminal section; belongs to the urease beta subunit family. In terms of assembly, heterohexamer of 3 UreC (alpha) and 3 UreAB (gamma/beta) subunits.

It is found in the cytoplasm. The catalysed reaction is urea + 2 H2O + H(+) = hydrogencarbonate + 2 NH4(+). The protein operates within nitrogen metabolism; urea degradation; CO(2) and NH(3) from urea (urease route): step 1/1. The sequence is that of Urease subunit gamma/beta from Pseudomonas syringae pv. tomato (strain ATCC BAA-871 / DC3000).